Reading from the N-terminus, the 317-residue chain is Uridylate kinase (317 aa).

9–12 (KISG) contributes to the ATP binding site. Gly49 provides a ligand contact to UMP. Positions 50 and 54 each coordinate ATP. Residues Asp69 and 130–137 (TGRPYFTT) each bind UMP. ATP-binding residues include Asn158, Tyr164, and Asp167.

This sequence belongs to the UMP kinase family. Homohexamer.

Its subcellular location is the cytoplasm. The enzyme catalyses UMP + ATP = UDP + ADP. It functions in the pathway pyrimidine metabolism; CTP biosynthesis via de novo pathway; UDP from UMP (UMPK route): step 1/1. Its activity is regulated as follows. Inhibited by UTP. Functionally, catalyzes the reversible phosphorylation of UMP to UDP. The chain is Uridylate kinase from Malacoplasma penetrans (strain HF-2) (Mycoplasma penetrans).